The following is a 127-amino-acid chain: Anti-adapter protein IraD (127 aa).

The protein belongs to the GpW/Gp25 family. IraD subfamily. Interacts with RssB.

The protein localises to the cytoplasm. Inhibits RpoS proteolysis by regulating RssB activity, thereby increasing the stability of the sigma stress factor RpoS during oxidative stress. Its effect on RpoS stability is due to its interaction with RssB, which probably blocks the interaction of RssB with RpoS, and the consequent delivery of the RssB-RpoS complex to the ClpXP protein degradation pathway. This is Anti-adapter protein IraD from Escherichia coli O127:H6 (strain E2348/69 / EPEC).